The primary structure comprises 597 residues: NADPH-dependent diflavin oxidoreductase 1 (597 aa).

In terms of domain architecture, Flavodoxin-like spans 6-150 (LLVLFGSQTG…AVDPWLRDLW (145 aa)). Residues 12–17 (SQTGTA), 59–62 (ATTG), 97–106 (LGDSSYAKFN), and Asp-132 each bind FMN. Residues 188–207 (GSEGQRVAHPGSQEPPSESK) are disordered. Residues 206-447 (SKPFLAPMIS…VRPGSLAFPE (242 aa)) form the FAD-binding FR-type domain. FAD-binding positions include Arg-350, 382–385 (RAFS), and 416–419 (GLCS). NADP(+)-binding positions include Thr-460, 515–516 (SR), 521–525 (KVYVQ), and Asp-558. Position 596 (Trp-596) interacts with FAD.

This sequence belongs to the NADPH-dependent diflavin oxidoreductase NDOR1 family. In the N-terminal section; belongs to the flavodoxin family. It in the C-terminal section; belongs to the flavoprotein pyridine nucleotide cytochrome reductase family. In terms of assembly, interacts with CIAPIN1; as part of the cytosolic iron-sulfur (Fe-S) protein assembly (CIA) machinery. Interacts with DCPS. FAD is required as a cofactor. FMN serves as cofactor. As to expression, low expression in brain, heart, kidney, pancreas, prostate and skeletal muscle. Highest levels in the placenta. Expressed in cancer cell lines including promyelocytic leukemia, HeLaS3, chronic myelagenous leukemia, lymphoblastic leukemia, Burkitt's lymphoma, colorectal adenocarcinoma, lung carcinoma, and melanoma G-361.

It localises to the cytoplasm. The protein localises to the perinuclear region. The enzyme catalyses 2 oxidized [2Fe-2S]-[protein] + NADPH = 2 reduced [2Fe-2S]-[protein] + NADP(+) + H(+). Functionally, NADPH-dependent reductase which is a central component of the cytosolic iron-sulfur (Fe-S) protein assembly (CIA) machinery. Transfers electrons from NADPH via its FAD and FMN prosthetic groups to the [2Fe-2S] cluster of CIAPIN1, another key component of the CIA machinery. In turn, this reduced cluster provides electrons for assembly of cytosolic iron-sulfur cluster proteins. It can also reduce the [2Fe-2S] cluster of CISD1 and activate this protein implicated in Fe/S cluster repair. In vitro can fully activate methionine synthase/MTR in the presence of soluble cytochrome b5/CYB5A. The chain is NADPH-dependent diflavin oxidoreductase 1 from Homo sapiens (Human).